The sequence spans 102 residues: Large ribosomal subunit protein bL21 (102 aa).

This sequence belongs to the bacterial ribosomal protein bL21 family. As to quaternary structure, part of the 50S ribosomal subunit. Contacts protein L20.

This protein binds to 23S rRNA in the presence of protein L20. In Levilactobacillus brevis (strain ATCC 367 / BCRC 12310 / CIP 105137 / JCM 1170 / LMG 11437 / NCIMB 947 / NCTC 947) (Lactobacillus brevis), this protein is Large ribosomal subunit protein bL21.